A 301-amino-acid chain; its full sequence is NADH-cytochrome b5 reductase 3 (301 aa).

The N-myristoyl glycine moiety is linked to residue G2. Residues 40-152 (DIKYPLRLID…RGPNGLLVYQ (113 aa)) enclose the FAD-binding FR-type domain. N6-acetyllysine is present on K42. A Phosphotyrosine modification is found at Y43. The residue at position 50 (K50) is an N6-acetyllysine. 6 residues coordinate FAD: R92, P93, Y94, V109, K111, and F114. An N6-acetyllysine modification is found at K120. K126, M127, S128, and T185 together coordinate FAD.

The protein belongs to the flavoprotein pyridine nucleotide cytochrome reductase family. Component of a complex composed of cytochrome b5, NADH-cytochrome b5 reductase (CYB5R3) and MTARC2. Interacts with MTLN; the interaction is required to maintain cellular lipid composition and leads to stimulation of mitochondrial respiratory complex I activity. FAD is required as a cofactor.

Its subcellular location is the endoplasmic reticulum membrane. It localises to the mitochondrion outer membrane. It catalyses the reaction 2 Fe(III)-[cytochrome b5] + NADH = 2 Fe(II)-[cytochrome b5] + NAD(+) + H(+). Functionally, catalyzes the reduction of two molecules of cytochrome b5 using NADH as the electron donor. The sequence is that of NADH-cytochrome b5 reductase 3 (CYB5R3) from Bos taurus (Bovine).